Consider the following 282-residue polypeptide: Protein DOG1-like 3 (282 aa).

The DOG1 domain occupies Glu-11 to Gln-254.

The chain is Protein DOG1-like 3 from Arabidopsis thaliana (Mouse-ear cress).